Consider the following 160-residue polypeptide: Cytochrome b6-f complex subunit 4 (160 aa).

3 helical membrane passes run 36–56 (LLYI…GLSV), 95–115 (LLGV…PFIE), and 127–147 (PVAM…GIGA).

It belongs to the cytochrome b family. PetD subfamily. As to quaternary structure, the 4 large subunits of the cytochrome b6-f complex are cytochrome b6, subunit IV (17 kDa polypeptide, petD), cytochrome f and the Rieske protein, while the 4 small subunits are petG, petL, petM and petN. The complex functions as a dimer.

Its subcellular location is the plastid. It localises to the chloroplast thylakoid membrane. Functionally, component of the cytochrome b6-f complex, which mediates electron transfer between photosystem II (PSII) and photosystem I (PSI), cyclic electron flow around PSI, and state transitions. The sequence is that of Cytochrome b6-f complex subunit 4 from Guillardia theta (Cryptophyte).